The primary structure comprises 261 residues: Small ribosomal subunit protein mS23 (261 aa).

The interval 234-261 (NPSESWATDEKDPKKNDDIEEDVEEIKL) is disordered. Basic and acidic residues predominate over residues 241-250 (TDEKDPKKND). A compositionally biased stretch (acidic residues) spans 251 to 261 (DIEEDVEEIKL).

The protein belongs to the mitochondrion-specific ribosomal protein mS23 family. As to quaternary structure, component of the mitochondrial small ribosomal subunit.

It is found in the mitochondrion. This chain is Small ribosomal subunit protein mS23 (RSM25), found in Vanderwaltozyma polyspora (strain ATCC 22028 / DSM 70294 / BCRC 21397 / CBS 2163 / NBRC 10782 / NRRL Y-8283 / UCD 57-17) (Kluyveromyces polysporus).